The sequence spans 513 residues: Putative thymidine phosphorylase 2 (513 aa).

Belongs to the thymidine/pyrimidine-nucleoside phosphorylase family. Type 2 subfamily.

It carries out the reaction thymidine + phosphate = 2-deoxy-alpha-D-ribose 1-phosphate + thymine. This chain is Putative thymidine phosphorylase 2, found in Acidovorax sp. (strain JS42).